The following is a 498-amino-acid chain: 4-aminobutyrate aminotransferase (498 aa).

164–165 (GS) lines the pyridoxal 5'-phosphate pocket. A substrate-binding site is contributed by Arg-222. Lys-356 is subject to N6-(pyridoxal phosphate)lysine. Pyridoxal 5'-phosphate is bound at residue Thr-381.

It belongs to the class-III pyridoxal-phosphate-dependent aminotransferase family. Homodimer. Pyridoxal 5'-phosphate is required as a cofactor.

Its subcellular location is the cytoplasm. The enzyme catalyses 4-aminobutanoate + 2-oxoglutarate = succinate semialdehyde + L-glutamate. Functionally, deaminates gamma-aminobutyric acid (GABA) to succinate-semialdehyde, which in turn is converted to succinate by the succinate semialdehyde dehydrogenase. Required for the degradation of GABA, which is important for utilization of GABA as nitrogen source. The polypeptide is 4-aminobutyrate aminotransferase (gatA) (Emericella nidulans (strain FGSC A4 / ATCC 38163 / CBS 112.46 / NRRL 194 / M139) (Aspergillus nidulans)).